A 337-amino-acid chain; its full sequence is Protein-arginine kinase (337 aa).

The Phosphagen kinase C-terminal domain maps to 8 to 239 (VVLSSRIRLA…KQIISSERRA (232 aa)). Residues 11-15 (SSRIR), H76, R110, 161-165 (RASVM), and 192-197 (RGIYGE) contribute to the ATP site. The short motif at 321–326 (RDVKRA) is the RDXXRA motif of the pArg binding pocket involved in allosteric regulation element.

Belongs to the ATP:guanido phosphotransferase family.

It catalyses the reaction L-arginyl-[protein] + ATP = N(omega)-phospho-L-arginyl-[protein] + ADP + H(+). Appears to be allosterically activated by the binding of pArg-containing polypeptides to the pArg-binding pocket localized in the C-terminal domain of McsB. Catalyzes the specific phosphorylation of arginine residues in proteins. The chain is Protein-arginine kinase from Caldanaerobacter subterraneus subsp. tengcongensis (strain DSM 15242 / JCM 11007 / NBRC 100824 / MB4) (Thermoanaerobacter tengcongensis).